The following is a 508-amino-acid chain: MALIFAVFFKKIVIDRQIEKLNDLEDEVEKAKLKAKEIVEEAERDAVSKAKEIELKAKEKAYQIKEEIEKEARNSKNEIAQKEARIIKKEEILDGKIEKIEIKSLELEKINDELEEKRKEIDDLRVKQEEELSRVSELTKADAREILLRKVREEMTHDMAITIREFENKLDEEKEKISQKILSTAIGKAAADYVADATVSVINLPNDEMKGRIIGREGRNIRTIEALTGVDVIIDDTPEAVVLSCFDGVKREVARLTIEKLITDGRIHPGKIEEIVNKCKKDIEKEIVAAGEEALIELSIPTMHPEIIKTLGRLKYRTSYGQNVLTHSIEVAKIASTMAAEIGANVELAKRGGLLHDIGKVLVNEIETSHAIVGGEFIKKFGEKQDVINAVMAHHNEVEFETVEAILVQAADAVSASRPGARRETLTAYIKRLENLEEIANSFEGVESSYAIQAGRELRIVINPDKVSDDEATLMSREVAKKIEDTMQYPGQIKVTILRETRAVEYAK.

The region spanning 198–264 is the KH domain; that stretch reads TVSVINLPND…RLTIEKLITD (67 aa). One can recognise an HD domain in the interval 324–417; it reads VLTHSIEVAK…VQAADAVSAS (94 aa).

It belongs to the RNase Y family.

Functionally, endoribonuclease that initiates mRNA decay. The protein is Ribonuclease Y of Fusobacterium nucleatum subsp. nucleatum (strain ATCC 25586 / DSM 15643 / BCRC 10681 / CIP 101130 / JCM 8532 / KCTC 2640 / LMG 13131 / VPI 4355).